Consider the following 151-residue polypeptide: Sperm surface protein Sp17 (151 aa).

The span at 68–98 (FYNNHAFEEQEPPEKSDPKQEESQIPGKEEE) shows a compositional bias: basic and acidic residues. Disordered stretches follow at residues 68–115 (FYNN…EKEE) and 130–151 (AREEVKKMKTDSLQNEEKEENK). Positions 114-143 (EEVAAVKIQAAFRGHVAREEVKKMKTDSLQ) constitute an IQ domain.

Homodimer. May interact with ROPN1. In terms of tissue distribution, testis- and sperm-specific.

It localises to the membrane. Functionally, sperm surface zona pellucida binding protein. Helps to bind spermatozoa to the zona pellucida with high affinity. Might function in binding zona pellucida and carbohydrates. In Macaca fascicularis (Crab-eating macaque), this protein is Sperm surface protein Sp17 (SPA17).